The following is a 93-amino-acid chain: Small ribosomal subunit protein uS19 (93 aa).

Belongs to the universal ribosomal protein uS19 family.

Protein S19 forms a complex with S13 that binds strongly to the 16S ribosomal RNA. The protein is Small ribosomal subunit protein uS19 of Campylobacter hominis (strain ATCC BAA-381 / DSM 21671 / CCUG 45161 / LMG 19568 / NCTC 13146 / CH001A).